We begin with the raw amino-acid sequence, 172 residues long: MKEEKKLLLREVEEKITASQGFILLRYLGFTAAHSRSFRNNLSGVSAEFEVLKKKIFFKALETSGVEMDPEDGEGHLGVVFAYGDPVSAAKQVLDFNKQHNDSLVFLAGRIDNASLSGREVEAVAKLPSMKELRQQVVGLIAAPMSQVAGIMNSVLSGVISCVDQKAEKTQE.

Belongs to the universal ribosomal protein uL10 family. In terms of assembly, part of the ribosomal stalk of the 50S ribosomal subunit. The N-terminus interacts with L11 and the large rRNA to form the base of the stalk. The C-terminus forms an elongated spine to which L12 dimers bind in a sequential fashion forming a multimeric L10(L12)X complex.

Its function is as follows. Forms part of the ribosomal stalk, playing a central role in the interaction of the ribosome with GTP-bound translation factors. The polypeptide is Large ribosomal subunit protein uL10 (Chlamydia trachomatis serovar A (strain ATCC VR-571B / DSM 19440 / HAR-13)).